We begin with the raw amino-acid sequence, 376 residues long: Glutamate 5-kinase (376 aa).

Position 18 (lysine 18) interacts with ATP. Substrate-binding residues include serine 58, aspartate 145, and asparagine 157. Residues 177–178 and 218–224 each bind ATP; these read SD and TGGMASK. Positions 280 to 358 constitute a PUA domain; the sequence is TGALTLDAGA…SELPGELRRP (79 aa).

The protein belongs to the glutamate 5-kinase family.

It is found in the cytoplasm. It carries out the reaction L-glutamate + ATP = L-glutamyl 5-phosphate + ADP. It participates in amino-acid biosynthesis; L-proline biosynthesis; L-glutamate 5-semialdehyde from L-glutamate: step 1/2. Functionally, catalyzes the transfer of a phosphate group to glutamate to form L-glutamate 5-phosphate. In Mycobacterium tuberculosis (strain CDC 1551 / Oshkosh), this protein is Glutamate 5-kinase.